Consider the following 281-residue polypeptide: tRNA uridine(34) hydroxylase (281 aa).

In terms of domain architecture, Rhodanese spans 125-222 (AREDVKTIDT…YFLKTKNKDG (98 aa)). C182 functions as the Cysteine persulfide intermediate in the catalytic mechanism.

The protein belongs to the TrhO family.

The enzyme catalyses uridine(34) in tRNA + AH2 + O2 = 5-hydroxyuridine(34) in tRNA + A + H2O. Catalyzes oxygen-dependent 5-hydroxyuridine (ho5U) modification at position 34 in tRNAs. The polypeptide is tRNA uridine(34) hydroxylase (Neorickettsia sennetsu (strain ATCC VR-367 / Miyayama) (Ehrlichia sennetsu)).